Here is a 747-residue protein sequence, read N- to C-terminus: ATPase family gene 2 protein homolog B (747 aa).

The residue at position 1 (Met-1) is an N-acetylmethionine. Residues 234 to 241 and 500 to 507 each bind ATP; these read GPPGVGKT and GPPGCAKT.

It belongs to the AAA ATPase family. AFG2 subfamily. In terms of assembly, part of the 55LCC heterohexameric ATPase complex composed at least of AIRIM, AFG2A, AFG2B and CINP. Associates with pre-60S ribosomal particles. In terms of tissue distribution, expressed in neurons; also expressed at lower level in astrocytes, oligodendrocytes and microglia.

The protein localises to the cytoplasm. Its subcellular location is the cytoskeleton. It is found in the spindle. The protein resides in the nucleus. The enzyme catalyses ATP + H2O = ADP + phosphate + H(+). With respect to regulation, in the context of 55LCC heterohexameric ATPase complex, the ATPase activity is stimulated by DNA binding and inhibited in presence of RNA. In terms of biological role, ATP-dependent chaperone part of the 55LCC heterohexameric ATPase complex which is chromatin-associated and promotes replisome proteostasis to maintain replication fork progression and genome stability. Required for replication fork progression, sister chromatid cohesion, and chromosome stability. The ATPase activity is specifically enhanced by replication fork DNA and is coupled to cysteine protease-dependent cleavage of replisome substrates in response to replication fork damage. Uses ATPase activity to process replisome substrates in S-phase, facilitating their proteolytic turnover from chromatin to ensure DNA replication and mitotic fidelity. Plays an essential role in the cytoplasmic maturation steps of pre-60S ribosomal particles by promoting the release of shuttling protein RSL24D1/RLP24 from the pre-ribosomal particles. In Rattus norvegicus (Rat), this protein is ATPase family gene 2 protein homolog B (Afg2b).